Here is a 294-residue protein sequence, read N- to C-terminus: Thymidylate synthase (294 aa).

Residues arginine 31 and 156-157 each bind dUMP; that span reads RR. Cysteine 176 functions as the Nucleophile in the catalytic mechanism. DUMP contacts are provided by residues 196 to 199, asparagine 207, and 237 to 239; these read RSAD and HIY. Aspartate 199 contacts (6R)-5,10-methylene-5,6,7,8-tetrahydrofolate. Alanine 293 provides a ligand contact to (6R)-5,10-methylene-5,6,7,8-tetrahydrofolate.

This sequence belongs to the thymidylate synthase family. Homodimer.

The enzyme catalyses dUMP + (6R)-5,10-methylene-5,6,7,8-tetrahydrofolate = 7,8-dihydrofolate + dTMP. The protein operates within pyrimidine metabolism; dTTP biosynthesis. The sequence is that of Thymidylate synthase (70) from Saimiri sciureus (Common squirrel monkey).